Consider the following 210-residue polypeptide: CKLF-like MARVEL transmembrane domain-containing protein 2B (210 aa).

The next 4 membrane-spanning stretches (helical) occupy residues 35-55 (FWAQ…IAAM), 65-85 (PIVI…FFLY), 103-123 (LMND…ALEA), and 127-147 (LPVP…ISII). In terms of domain architecture, MARVEL spans 35-157 (FWAQGHAECK…DLCLQRRQFK (123 aa)).

It belongs to the chemokine-like factor family.

It is found in the membrane. The polypeptide is CKLF-like MARVEL transmembrane domain-containing protein 2B (Cmtm2b) (Mus musculus (Mouse)).